The following is a 337-amino-acid chain: Fructose-1,6-bisphosphatase class 1 (337 aa).

The Mg(2+) site is built by E89, D112, L114, and D115. Residues 115–118, N208, Y241, and K271 contribute to the substrate site; that span reads DGSS. E277 is a binding site for Mg(2+).

The protein belongs to the FBPase class 1 family. As to quaternary structure, homotetramer. The cofactor is Mg(2+).

Its subcellular location is the cytoplasm. The catalysed reaction is beta-D-fructose 1,6-bisphosphate + H2O = beta-D-fructose 6-phosphate + phosphate. It functions in the pathway carbohydrate biosynthesis; gluconeogenesis. The polypeptide is Fructose-1,6-bisphosphatase class 1 (Yersinia enterocolitica serotype O:8 / biotype 1B (strain NCTC 13174 / 8081)).